We begin with the raw amino-acid sequence, 211 residues long: Ribosomal RNA small subunit methyltransferase G (211 aa).

S-adenosyl-L-methionine contacts are provided by residues Gly72, Phe77, 125 to 126 (IE), and Arg141.

It belongs to the methyltransferase superfamily. RNA methyltransferase RsmG family.

It localises to the cytoplasm. It catalyses the reaction guanosine(527) in 16S rRNA + S-adenosyl-L-methionine = N(7)-methylguanosine(527) in 16S rRNA + S-adenosyl-L-homocysteine. Its function is as follows. Specifically methylates the N7 position of guanine in position 527 of 16S rRNA. This is Ribosomal RNA small subunit methyltransferase G from Allorhizobium ampelinum (strain ATCC BAA-846 / DSM 112012 / S4) (Agrobacterium vitis (strain S4)).